Reading from the N-terminus, the 780-residue chain is MATQSDLMELEMAMDPDRKAAVSHWQQQSYLDSGIHSGATTTAPSLSGKGNPEDDDVDNQVLYEWEQGFNQSFNQEQVADIDGQYAMTRAQRVRAAMFPETLDEGMQIPSTQFDSAHPTNVQRLAEPSQMLKHAVVNLINYQDDAELATRAIPELTKLLNDEDQVVVNKAAVMVHQLSKKEASRHAIMRSPQMVSAIVRTMQNTNDVETARCTSGTLHNLSHHREGLLAIFKSGGIPALVKMLGSPVDSVLFYAITTLHNLLLHQEGAKMAVRLAGGLQKMVALLNKTNVKFLAITTDCLQILAYGNQESKLIILASGGPQALVNIMRTYTYEKLLWTTSRVLKVLSVCSSNKPAIVEAGGMQALGLHLTDPSQRLVQNCLWTLRNLSDAATKQEGMEGLLGTLVQLLGSDDINVVTCAAGILSNLTCNNYKNKMMVCQVGGIEALVRTVLRAGDREDITEPAICALRHLTSRHQDAEMAQNAVRLHYGLPVVVKLLHPPSHWPLIKATVGLIRNLALCPANHAPLREQGAIPRLVQLLVRAHQDTQRRTSMGGTQQQFVEGVRMEEIVEGCTGALHILARDIHNRIVIRGLNTIPLFVQLLYSPIENIQRVAAGVLCELAQDKEAAEAIEAEGATAPLTELLHSRNEGVATYAAAVLFRMSEDKPQDYKKRLSVELTSSLFRTEPMTWNETGDLGLDIGAQGEPLGYRQDDPSYRSFHSGGYGQDAMGMDPMMEHEMAGHHPGPDYPVDGLPDLGHTQDLIDGLPPGDSNQLAWFDTDL.

The interval 34 to 56 is disordered; the sequence is GIHSGATTTAPSLSGKGNPEDDD. ARM repeat units lie at residues 140-179, 224-263, 266-305, 350-389, 399-430, 431-472, 478-518, 520-561, 583-622, and 624-663; these read NYQD…QLSK, REGL…NLLL, EGAK…ILAY, SSNK…NLSD, GLLG…TCNN, YKNK…HLTS, EMAQ…NLAL, PANH…QFVE, IHNR…ELAQ, and KEAA…RMSE. The segment covering 735–744 has biased composition (basic and acidic residues); the sequence is EHEMAGHHPG. A disordered region spans residues 735-770; sequence EHEMAGHHPGPDYPVDGLPDLGHTQDLIDGLPPGDS.

Belongs to the beta-catenin family. As to quaternary structure, interacts with adnpa. Interacts with cdh1 during oogenesis and in the unfertilized egg. Interacts with ctnna1 and cdh2. Post-translationally, phosphorylation by gsk3b promotes ubiquitination and subsequent degradation by the proteasome. In terms of processing, ubiquitinated when phosphorylated by gsk3b, leading to its degradation. In terms of tissue distribution, expressed in the successional lamina, also expressed in both the epithelial and mesenchymal cells of the developing replacement tooth (at protein level). Expressed in the enamel organ as well as in the inner and outer dental epithelium during replacement tooth morphogenesis (at protein level). Expressed in the differentiated, polarized odontoblasts that line the dentine matrix as well as in the inner and outer dental epithelium during tooth cytodifferentiation (at protein level). Expressed in the reduced enamel organ, odontoblasts and weakly at the center of the dental papilla of the functional tooth as well as in the epithelial crypts surrounding the functional tooth (at protein level). Expressed in the liver (at protein level). Expressed at intercalated disks in the heart (at protein level). Expressed in the ovary.

Its subcellular location is the cytoplasm. It is found in the nucleus. The protein localises to the cell membrane. The protein resides in the cell junction. It localises to the adherens junction. Key downstream component of the canonical Wnt signaling pathway. In the absence of Wnt, forms a complex with axin1, axin2, apc, csnk1a1 and gsk3b that promotes phosphorylation on N-terminal Ser and Thr residues and ubiquitination of ctnnb1 and its subsequent degradation by the proteasome. In the presence of Wnt ligand, ctnnb1 is not ubiquitinated and accumulates in the nucleus, where it acts as a coactivator for transcription factors of the TCF/LEF family, leading to activate Wnt responsive genes. Plays a key role in dorsoventral patterning: in prospective ventral blastomeres, its down-regulation by axin1 and axin2 leads to inhibit the Wnt signaling pathway, while in prospective dorsal blastomeres, degradation of axin results in stabilization and nuclear translocation of ctnnb1. The polypeptide is Catenin beta-1 (Danio rerio (Zebrafish)).